Consider the following 839-residue polypeptide: Oligopeptide transporter phomP2 (839 aa).

The disordered stretch occupies residues 1 to 58 (MEADPKVPFTDEMNIQDEHNWESGSWSSSRRSNDSNVTLLSRRSSVEQHEDERQKDSD). The span at 23–36 (SGSWSSSRRSNDSN) shows a compositional bias: low complexity. N-linked (GlcNAc...) asparagine glycans are attached at residues Asn33 and Asn36. Residues 44–58 (SSVEQHEDERQKDSD) show a composition bias toward basic and acidic residues. 6 helical membrane passes run 105 to 125 (VWLL…VYYF), 177 to 197 (ALVV…GPLS), 210 to 230 (PWAI…VGLY), 268 to 288 (VFMA…FVFP), 315 to 335 (GFGL…SPLF), and 345 to 365 (FVGA…SDAL). 2 N-linked (GlcNAc...) asparagine glycosylation sites follow: Asn386 and Asn398. A run of 4 helical transmembrane segments spans residues 415-435 (AMHF…AVLF), 478-498 (AWYA…LYAG), 505-525 (WGLQ…GMLF), and 585-605 (WELL…NWAV). Over residues 629-646 (QGLGLGQGGGGGGGGGGQ) the composition is skewed to gly residues. A disordered region spans residues 629 to 654 (QGLGLGQGGGGGGGGGGQQQRAAGAH). Transmembrane regions (helical) follow at residues 665-685 (NFFS…FGGG), 697-717 (WLLP…WLIH), and 728-748 (WPLH…FPTT). Asn749 carries N-linked (GlcNAc...) asparagine glycosylation. Residues 781 to 801 (AGLDCGAQLVQMVLGVAFLVF) form a helical membrane-spanning segment.

This sequence belongs to the oligopeptide OPT transporter family.

Its subcellular location is the membrane. In terms of biological role, oligopeptide transporter; part of the gene cluster that mediates the biosynthesis of the phomopsins, a group of hexapeptide mycotoxins which infects lupins and causes lupinosis disease in livestock. This is Oligopeptide transporter phomP2 from Diaporthe leptostromiformis (Lupinosis disease fungus).